The primary structure comprises 378 residues: Carbamoyl phosphate synthase small chain (378 aa).

The tract at residues Met-1–Glu-189 is CPSase. Residues Ser-47, Gly-241, and Gly-243 each contribute to the L-glutamine site. Positions His-193–Arg-378 constitute a Glutamine amidotransferase type-1 domain. The active-site Nucleophile is Cys-269. Residues Leu-270, Gln-273, Asn-311, Gly-313, and Phe-314 each contribute to the L-glutamine site. Active-site residues include His-353 and Glu-355.

The protein belongs to the CarA family. As to quaternary structure, composed of two chains; the small (or glutamine) chain promotes the hydrolysis of glutamine to ammonia, which is used by the large (or ammonia) chain to synthesize carbamoyl phosphate. Tetramer of heterodimers (alpha,beta)4.

It carries out the reaction hydrogencarbonate + L-glutamine + 2 ATP + H2O = carbamoyl phosphate + L-glutamate + 2 ADP + phosphate + 2 H(+). The enzyme catalyses L-glutamine + H2O = L-glutamate + NH4(+). The protein operates within amino-acid biosynthesis; L-arginine biosynthesis; carbamoyl phosphate from bicarbonate: step 1/1. It participates in pyrimidine metabolism; UMP biosynthesis via de novo pathway; (S)-dihydroorotate from bicarbonate: step 1/3. In terms of biological role, small subunit of the glutamine-dependent carbamoyl phosphate synthetase (CPSase). CPSase catalyzes the formation of carbamoyl phosphate from the ammonia moiety of glutamine, carbonate, and phosphate donated by ATP, constituting the first step of 2 biosynthetic pathways, one leading to arginine and/or urea and the other to pyrimidine nucleotides. The small subunit (glutamine amidotransferase) binds and cleaves glutamine to supply the large subunit with the substrate ammonia. This chain is Carbamoyl phosphate synthase small chain, found in Pseudomonas aeruginosa (strain ATCC 15692 / DSM 22644 / CIP 104116 / JCM 14847 / LMG 12228 / 1C / PRS 101 / PAO1).